A 1366-amino-acid chain; its full sequence is DNA-directed RNA polymerase subunit beta (1366 aa).

This sequence belongs to the RNA polymerase beta chain family. As to quaternary structure, the RNAP catalytic core consists of 2 alpha, 1 beta, 1 beta' and 1 omega subunit. When a sigma factor is associated with the core the holoenzyme is formed, which can initiate transcription.

The enzyme catalyses RNA(n) + a ribonucleoside 5'-triphosphate = RNA(n+1) + diphosphate. Functionally, DNA-dependent RNA polymerase catalyzes the transcription of DNA into RNA using the four ribonucleoside triphosphates as substrates. In Polynucleobacter asymbioticus (strain DSM 18221 / CIP 109841 / QLW-P1DMWA-1) (Polynucleobacter necessarius subsp. asymbioticus), this protein is DNA-directed RNA polymerase subunit beta.